Reading from the N-terminus, the 2160-residue chain is Autophagy-related protein 2 (2160 aa).

Polar residues-rich tracts occupy residues 100–116 (SFST…SPSK), 153–168 (AITS…SASI), and 292–306 (TTPV…SSRI). 8 disordered regions span residues 100–130 (SFST…ILPT), 142–174 (EPKE…DEEE), 288–317 (PASP…TPDA), 347–371 (RMEG…DRSD), 401–519 (LHDD…DFAN), 657–689 (DRRH…HSSA), 715–739 (FEGT…SKSQ), and 953–978 (FSTA…SPPP). Positions 404-414 (DDLEPPEDLVP) are enriched in acidic residues. Low complexity predominate over residues 415–425 (QDDQFPPSSAT). The span at 439 to 451 (TSPSGIDTEQTAP) shows a compositional bias: polar residues. The segment covering 483–497 (SHSASSPSGSLPSRE) has biased composition (low complexity). Positions 500 to 517 (NRQTAPPSESGSIGSSDF) are enriched in polar residues. Residues 657 to 666 (DRRHTDETVH) show a composition bias toward basic and acidic residues.

This sequence belongs to the ATG2 family.

Its subcellular location is the preautophagosomal structure membrane. It localises to the endoplasmic reticulum membrane. The enzyme catalyses a 1,2-diacyl-sn-glycero-3-phosphocholine(in) = a 1,2-diacyl-sn-glycero-3-phosphocholine(out). The catalysed reaction is a 1,2-diacyl-sn-glycero-3-phospho-L-serine(in) = a 1,2-diacyl-sn-glycero-3-phospho-L-serine(out). It catalyses the reaction a 1,2-diacyl-sn-glycero-3-phosphoethanolamine(in) = a 1,2-diacyl-sn-glycero-3-phosphoethanolamine(out). Functionally, lipid transfer protein required for autophagosome completion and peroxisome degradation. Tethers the edge of the isolation membrane (IM) to the endoplasmic reticulum (ER) and mediates direct lipid transfer from ER to IM for IM expansion. Atg2 binds to the ER exit site (ERES), which is the membrane source for autophagosome formation, using basic residues in its N-terminal region (NR) and to the expanding edge of the IM through its C-terminal region. The latter binding is assisted by an atg18-PtdIns3P interaction. Atg2 then extracts phospholipids from the membrane source using its NR and transfers them to atg9 to the IM through its predicted beta-sheet-rich structure for membrane expansion. This Aspergillus fumigatus (strain ATCC MYA-4609 / CBS 101355 / FGSC A1100 / Af293) (Neosartorya fumigata) protein is Autophagy-related protein 2 (atg2).